Reading from the N-terminus, the 427-residue chain is MESLTLQPIARVDGTINLPGSKSVSNRALLLAALAHGKTVLTNLLDSDDVRHMLNALTALGVSYTLSADRTRCEIIGNGGPLHAKSALELFLGNAGTAMRPLAAALCLGSNDIVLTGEPRMKERPIGHLVDALRLGGAKITYLEQENYPPLRLQGGFTGGNVDVDGSVSSQFLTALLMTAPLAPEDTVIRIKGDLVSKPYIDITLNLMKTFGVEIENQHYQQFVVKGGQSYQSPGTYLVEGDASSASYFLAAAAIKGGTVKVTGIGRNSMQGDIRFADVLEKMGATICWGDDYISCMRGELNAIDMDMNHIPDAAMTIATAALFAKGTTTLRNIYNWRVKETDRLFAMATELRKVGAEVEEGHDFIRITPPEKLKFAEIATYNDHRMAMCFSLVALSDTAVTILDPKCTAKTFPDYFEQLARISQSG.

3-phosphoshikimate contacts are provided by lysine 22, serine 23, and arginine 27. Residue lysine 22 coordinates phosphoenolpyruvate. 2 residues coordinate phosphoenolpyruvate: glycine 96 and arginine 124. Residues serine 169, serine 170, glutamine 171, serine 197, aspartate 313, asparagine 336, and lysine 340 each contribute to the 3-phosphoshikimate site. Glutamine 171 is a phosphoenolpyruvate binding site. The Proton acceptor role is filled by aspartate 313. Phosphoenolpyruvate is bound by residues arginine 344, arginine 386, and lysine 411.

The protein belongs to the EPSP synthase family. In terms of assembly, monomer.

It is found in the cytoplasm. It carries out the reaction 3-phosphoshikimate + phosphoenolpyruvate = 5-O-(1-carboxyvinyl)-3-phosphoshikimate + phosphate. It functions in the pathway metabolic intermediate biosynthesis; chorismate biosynthesis; chorismate from D-erythrose 4-phosphate and phosphoenolpyruvate: step 6/7. Functionally, catalyzes the transfer of the enolpyruvyl moiety of phosphoenolpyruvate (PEP) to the 5-hydroxyl of shikimate-3-phosphate (S3P) to produce enolpyruvyl shikimate-3-phosphate and inorganic phosphate. This Escherichia coli O127:H6 (strain E2348/69 / EPEC) protein is 3-phosphoshikimate 1-carboxyvinyltransferase.